The following is a 162-amino-acid chain: Cyclic pyranopterin monophosphate synthase (162 aa).

Residues 75–77 and 113–114 each bind substrate; these read LCH and ME. Asp-128 is a catalytic residue.

It belongs to the MoaC family. Homohexamer; trimer of dimers.

It catalyses the reaction (8S)-3',8-cyclo-7,8-dihydroguanosine 5'-triphosphate = cyclic pyranopterin phosphate + diphosphate. Its pathway is cofactor biosynthesis; molybdopterin biosynthesis. Functionally, catalyzes the conversion of (8S)-3',8-cyclo-7,8-dihydroguanosine 5'-triphosphate to cyclic pyranopterin monophosphate (cPMP). The protein is Cyclic pyranopterin monophosphate synthase of Burkholderia ambifaria (strain MC40-6).